The chain runs to 96 residues: MNTKNFTPQESRTNAQQVRQQNQQSAQGTSSGFATEFASETNAQQVRQQNQQSAQANRMSGATAGGFNTEFASETNVQQVRQQNQQSEAKKRNNQQ.

A compositionally biased stretch (polar residues) spans 1–15 (MNTKNFTPQESRTNA). The disordered stretch occupies residues 1–96 (MNTKNFTPQE…SEAKKRNNQQ (96 aa)). Residues 16–27 (QQVRQQNQQSAQ) show a composition bias toward low complexity. Polar residues predominate over residues 28 to 41 (GTSSGFATEFASET). 2 consecutive repeats follow at residues 28–52 (GTSSGFATEFASETNAQQVRQQNQQ) and 61–87 (GATAGGFNTEFASETNVQQVRQQNQQS). Composition is skewed to low complexity over residues 42–57 (NAQQVRQQNQQSAQAN) and 76–86 (NVQQVRQQNQQ).

Belongs to the gamma-type SASP family.

Functionally, SASP are proteins degraded in the first minutes of spore germination and provide amino acids for both new protein synthesis and metabolism. These proteins may be involved in dormant spore's high resistance to UV light. This chain is Small, acid-soluble spore protein gamma-type, found in Laceyella sacchari (Thermoactinomyces thalpophilus).